The sequence spans 649 residues: tRNA-guanine(15) transglycosylase (649 aa).

The active-site Nucleophile is Asp-88. Substrate-binding residues include Asp-123 and Ala-194. Residues Cys-280, Cys-282, and Cys-285 each coordinate Zn(2+). Residues 572-647 (KYRVIVDKSV…VAVNIRGGLK (76 aa)) form the PUA domain.

This sequence belongs to the archaeosine tRNA-ribosyltransferase family. Zn(2+) serves as cofactor.

It carries out the reaction guanosine(15) in tRNA + 7-cyano-7-deazaguanine = 7-cyano-7-carbaguanosine(15) in tRNA + guanine. The protein operates within tRNA modification; archaeosine-tRNA biosynthesis. Exchanges the guanine residue with 7-cyano-7-deazaguanine (preQ0) at position 15 in the dihydrouridine loop (D-loop) of archaeal tRNAs. The polypeptide is tRNA-guanine(15) transglycosylase (Methanococcus vannielii (strain ATCC 35089 / DSM 1224 / JCM 13029 / OCM 148 / SB)).